Reading from the N-terminus, the 218-residue chain is Tubulin polymerization-promoting protein (218 aa).

A disordered region spans residues 1-46 (MADSKAKPAKAANKTPPKSPGDPARAAKRLSLESEGANEGATAAPE). The tract at residues 1-115 (MADSKAKPAK…SCRTITFEQF (115 aa)) is mediates interaction with LIMK1. Position 15 is a phosphothreonine (threonine 15). Phosphoserine occurs at positions 19, 31, and 34. Position 42 is a phosphothreonine (threonine 42). Residues histidine 60, histidine 71, cysteine 79, and cysteine 82 each coordinate Zn(2+). Threonine 91 is subject to Phosphothreonine. A Phosphoserine modification is found at serine 106. O-linked (GlcNAc) serine glycosylation occurs at serine 151. Phosphoserine occurs at positions 158 and 159. The tract at residues 166–192 (TDTSKFTGSHKERFDQSGKGKGKAGRV) is disordered. Basic and acidic residues predominate over residues 174–183 (SHKERFDQSG).

It belongs to the TPPP family. Homodimer. Binds tubulin; binding is inhibited by GTP. Interacts with MAPK1. Interacts with GAPDH; the interaction is direct. Interacts with LIMK1 (via the PDZ domain); the interaction is direct. Interacts with LIMK2. Interacts with HDAC6; thereby inhibiting the tubulin deacetylase activity of HDAC6. Interacts with aggregated SNCA; may have a pro-aggregatory role in synucleinopathies. Interacts with DYNLL1. Interacts (via C-terminus) with S100A2, S100A6 and S100B; these interactions inhibit TPPP dimerization. Requires Mg(2+) as cofactor. In terms of processing, phosphorylated by LIMK1 on serine residues; phosphorylation may alter the tubulin polymerization activity. Phosphorylation by LIMK2, but not LIMK1, regulates astral microtubule organization at early stage of mitosis. Phosphorylation by ROCK1 at Ser-31, Ser-106 and Ser-158 inhibits interaction with HDAC6, resulting in decreased acetylation of tubulin, increased cell motility and entry into S-phase. Phosphorylation by CDK1 inhibits the microtubule polymerizing activity. Post-translationally, degraded by the proteasome; zinc-binding inhibits degradation by the proteasome. Widely expressed with higher expression in brain (at protein level).

It is found in the golgi outpost. The protein localises to the cytoplasm. The protein resides in the cytoskeleton. It localises to the microtubule organizing center. Its subcellular location is the nucleus. It is found in the spindle. It catalyses the reaction GTP + H2O = GDP + phosphate + H(+). Functionally, regulator of microtubule dynamics that plays a key role in myelination by promoting elongation of the myelin sheath. Acts as a microtubule nucleation factor in oligodendrocytes: specifically localizes to the postsynaptic Golgi apparatus region, also named Golgi outpost, and promotes microtubule nucleation, an important step for elongation of the myelin sheath. Required for both uniform polarized growth of distal microtubules as well as directing the branching of proximal processes. Shows magnesium-dependent GTPase activity; the role of the GTPase activity is unclear. In addition to microtubule nucleation activity, also involved in microtubule bundling and stabilization of existing microtubules, thereby maintaining the integrity of the microtubule network. Regulates microtubule dynamics by promoting tubulin acetylation: acts by inhibiting the tubulin deacetylase activity of HDAC6. Also regulates cell migration: phosphorylation by ROCK1 inhibits interaction with HDAC6, resulting in decreased acetylation of tubulin and increased cell motility. Plays a role in cell proliferation by regulating the G1/S-phase transition. Involved in astral microtubule organization and mitotic spindle orientation during early stage of mitosis; this process is regulated by phosphorylation by LIMK2. This Mus musculus (Mouse) protein is Tubulin polymerization-promoting protein.